The primary structure comprises 419 residues: Indole prenyltransferase tdiB (419 aa).

58–59 contributes to the L-tryptophan binding site; the sequence is PS. Arginine 81, lysine 165, tyrosine 167, arginine 236, lysine 238, tyrosine 240, tyrosine 330, and tyrosine 394 together coordinate substrate.

It belongs to the tryptophan dimethylallyltransferase family.

It carries out the reaction didemethylasterriquinone D + dimethylallyl diphosphate = asterriquinone C1 + diphosphate. The protein operates within secondary metabolite biosynthesis. Its function is as follows. Indole prenyltransferase; part of the gene cluster that mediates the biosynthesis of terrequinone A, an antitumor agent. The first step in the biosynthetic pathway for terrequinone A is formation of indole pyruvic acid (IPA) from L-tryptophan by the aminotransferase tdiD. The nonribosomal peptide synthase tdiA then immediately converts unstable IPA to didemethylasterriquinone D (DDAQ D), via condensation of 2 IPA molecules. The symmetric connectivity of the 2 IPA molecules is thought to arise by head-to-tail dual Claisen condensations facilitated by the TE domain. TdiB then catalyzes reverse prenylation by transferring dimethylallyl diphosphate to carbon atom 2' of DDAQ D, to yield asterriquinone C-1. Finally, tdiC and tdiE enzymes robustly convert asterriquinone C-1 to terrequinone A via a transformation involving regular prenylation at carbon atom 5, which requires elimination of the hydroxy group on C-5. The polypeptide is Indole prenyltransferase tdiB (Emericella nidulans (strain FGSC A4 / ATCC 38163 / CBS 112.46 / NRRL 194 / M139) (Aspergillus nidulans)).